Here is a 212-residue protein sequence, read N- to C-terminus: Large ribosomal subunit protein uL3 (212 aa).

Residue Gln-153 is modified to N5-methylglutamine.

It belongs to the universal ribosomal protein uL3 family. Part of the 50S ribosomal subunit. Forms a cluster with proteins L14 and L19. Methylated by PrmB.

Its function is as follows. One of the primary rRNA binding proteins, it binds directly near the 3'-end of the 23S rRNA, where it nucleates assembly of the 50S subunit. The sequence is that of Large ribosomal subunit protein uL3 from Dechloromonas aromatica (strain RCB).